Reading from the N-terminus, the 261-residue chain is Nickel import ATP-binding protein NikD (261 aa).

The 243-residue stretch at 6 to 248 folds into the ABC transporter domain; the sequence is LRIEGLTIAT…PRHDATRALV (243 aa). ATP is bound at residue 41-48; the sequence is GASGSGKS.

The protein belongs to the ABC transporter superfamily. Nickel importer (TC 3.A.1.5.3) family. The complex is composed of two ATP-binding proteins (NikD and NikE), two transmembrane proteins (NikB and NikC) and a solute-binding protein (NikA).

Its subcellular location is the cell inner membrane. It catalyses the reaction Ni(2+)(out) + ATP + H2O = Ni(2+)(in) + ADP + phosphate + H(+). Functionally, part of the ABC transporter complex NikABCDE involved in nickel import. Responsible for energy coupling to the transport system. The polypeptide is Nickel import ATP-binding protein NikD (Rhodospirillum rubrum (strain ATCC 11170 / ATH 1.1.1 / DSM 467 / LMG 4362 / NCIMB 8255 / S1)).